A 450-amino-acid polypeptide reads, in one-letter code: 23S rRNA (uracil(1939)-C(5))-methyltransferase RlmD (450 aa).

The region spanning 1–62 (MPVAGPLDIV…PSYEQAGVVN (62 aa)) is the TRAM domain. The [4Fe-4S] cluster site is built by cysteine 75, cysteine 81, cysteine 84, and cysteine 163. The S-adenosyl-L-methionine site is built by glutamine 271, phenylalanine 300, asparagine 305, glutamate 321, asparagine 349, and aspartate 370. The active-site Nucleophile is the cysteine 406.

The protein belongs to the class I-like SAM-binding methyltransferase superfamily. RNA M5U methyltransferase family. RlmD subfamily.

The enzyme catalyses uridine(1939) in 23S rRNA + S-adenosyl-L-methionine = 5-methyluridine(1939) in 23S rRNA + S-adenosyl-L-homocysteine + H(+). Catalyzes the formation of 5-methyl-uridine at position 1939 (m5U1939) in 23S rRNA. This chain is 23S rRNA (uracil(1939)-C(5))-methyltransferase RlmD, found in Ralstonia pickettii (strain 12J).